We begin with the raw amino-acid sequence, 738 residues long: Melanotransferrin (738 aa).

An N-terminal signal peptide occupies residues 1 to 19 (MRLLSVTFWLLLSLRTVVC). 2 Transferrin-like domains span residues 23 to 357 (VQWC…GLLC) and 366 to 706 (LRWC…GMLS). 2 disulfide bridges follow: Cys26–Cys63 and Cys36–Cys54. Fe(3+)-binding residues include Asp78 and Tyr107. The N-linked (GlcNAc...) asparagine glycan is linked to Asn118. Cystine bridges form between Cys130-Cys216, Cys172-Cys189, Cys186-Cys199, and Cys257-Cys271. Thr132 lines the hydrogencarbonate pocket. Asn135 is a glycosylation site (N-linked (GlcNAc...) asparagine). Hydrogencarbonate contacts are provided by Arg136, Val138, and Gly139. Tyr210 contributes to the Fe(3+) binding site. His279 and Tyr451 together coordinate Fe(3+). Ser462 is modified (phosphoserine). Asn515 carries an N-linked (GlcNAc...) asparagine glycan. Fe(3+) is bound by residues Tyr556 and His625. Residue Cys709 is the site of GPI-anchor amidated cysteine attachment. The propeptide at 710 to 738 (SGAGAAVQRVPLLALLLLTLAAGLLPRVL) is removed in mature form.

It belongs to the transferrin family.

The protein localises to the cell membrane. Functionally, involved in iron cellular uptake. Seems to be internalized and then recycled back to the cell membrane. Binds a single atom of iron per subunit. Could also bind zinc. The protein is Melanotransferrin (Meltf) of Mus musculus (Mouse).